Reading from the N-terminus, the 130-residue chain is Ribosome-binding factor A (130 aa).

It belongs to the RbfA family. As to quaternary structure, monomer. Binds 30S ribosomal subunits, but not 50S ribosomal subunits or 70S ribosomes.

The protein resides in the cytoplasm. Functionally, one of several proteins that assist in the late maturation steps of the functional core of the 30S ribosomal subunit. Associates with free 30S ribosomal subunits (but not with 30S subunits that are part of 70S ribosomes or polysomes). Required for efficient processing of 16S rRNA. May interact with the 5'-terminal helix region of 16S rRNA. This Roseiflexus castenholzii (strain DSM 13941 / HLO8) protein is Ribosome-binding factor A.